The sequence spans 148 residues: Large ribosomal subunit protein uL15 (148 aa).

The tract at residues 1–61 (MELNELRPAV…GGQMPMQRRL (61 aa)) is disordered. Positions 30 to 39 (TATKGHKGQK) are enriched in basic residues.

It belongs to the universal ribosomal protein uL15 family. As to quaternary structure, part of the 50S ribosomal subunit.

In terms of biological role, binds to the 23S rRNA. The protein is Large ribosomal subunit protein uL15 of Geobacter sulfurreducens (strain ATCC 51573 / DSM 12127 / PCA).